A 147-amino-acid chain; its full sequence is Large ribosomal subunit protein uL11 (147 aa).

This sequence belongs to the universal ribosomal protein uL11 family. Part of the ribosomal stalk of the 50S ribosomal subunit. Interacts with L10 and the large rRNA to form the base of the stalk. L10 forms an elongated spine to which L12 dimers bind in a sequential fashion forming a multimeric L10(L12)X complex. Post-translationally, one or more lysine residues are methylated.

Functionally, forms part of the ribosomal stalk which helps the ribosome interact with GTP-bound translation factors. This is Large ribosomal subunit protein uL11 from Bacteroides fragilis (strain ATCC 25285 / DSM 2151 / CCUG 4856 / JCM 11019 / LMG 10263 / NCTC 9343 / Onslow / VPI 2553 / EN-2).